The primary structure comprises 131 residues: Ribosomally synthesized cyclic peptide phomopsin precursor gigA (131 aa).

The N-terminal stretch at 1 to 18 (MQFTLIFFYATLAAFGLA) is a signal peptide. Propeptides lie at residues 19-38 (APSE…LDKR), 48-65 (ADLV…LDKR), 75-92 (ADMV…LDKR), 102-119 (ADMV…LAKR), and 129-131 (ADM).

GigA is processed by several endopeptidases including kexin proteases to produce 2 identical copies of the nonaxapeptide Ile-Asn-Phe-Lys-Ile-Pro-Tyr-Thr-Gly, one copy of the nonaketide Ile-Gly-Phe-Lys-Leu-Pro-Tyr-Arg-Gly and one copy of the nonaketide Pro-Asn-Phe-Lys-Met-Pro-Tyr-Arg-Gly, that are further modified into phomapsins B, C and A, respectively. After being excised from the precursor peptide, the core peptides are cyclized and modified post-translationally by enzymes encoded within the gene cluster. Epichloecyclin biosynthesis requires only dimethylation of the side-chain amino group of the conserved lysine for completion.

It functions in the pathway mycotoxin biosynthesis. Its function is as follows. Ribosomally synthesized cyclic peptide phomopsin precursor; part of the gene cluster that mediates the biosynthesis of the epichloecyclins, a group of nonapeptides, with a likely cyclic structure and dimethylation of the conserved lysine. The gigA translated product contains 4 repeated peptide embedding the nonapeptide Ile-Asn-Phe-Lys-Ile-Pro-Tyr-Thr-Gly in repeats 1 and 2, Ile-Gly-Phe-Lys-Leu-Pro-Tyr-Arg-Gly in repeat 3, and Pro-Asn-Phe-Lys-Met-Pro-Tyr-Arg-Gly in repeat 4 that are converted into epichloecyclins B, C and A, respectively. Moreover, removal of the last Gly residue in epichloecyclins B and C leads to epichloecyclins D and E, respectively. In Epichloe festucae (strain Fl1), this protein is Ribosomally synthesized cyclic peptide phomopsin precursor gigA (nc25).